Consider the following 380-residue polypeptide: NF-kappa-B inhibitor-like protein 1 (380 aa).

Positions 1–34 are disordered; the sequence is MSNPSPQVPEEEASTSVCRPKSSMASTSRRQRRE. ANK repeat units lie at residues 64 to 93 and 97 to 133; these read GQPP…DPAH and HGDT…IKNK. 2 disordered regions span residues 131 to 166 and 185 to 293; these read KNKD…EWRQ and GDAS…RGSL. At Ser-150 the chain carries Phosphoserine. Residues 237 to 286 are compositionally biased toward basic and acidic residues; it reads QQEEEQRLFRERARAKEEELRESRARRAQEALGDREPKPTRAGPREEHPR.

In terms of assembly, interacts with CACTIN (via N-terminal domain); the interaction occurs in a pro-inflammatory-independent manner.

Its subcellular location is the nucleus. Functionally, involved in the regulation of innate immune response. Acts as negative regulator of Toll-like receptor and interferon-regulatory factor (IRF) signaling pathways. Contributes to the negative regulation of transcriptional activation of NF-kappa-B target genes in response to endogenous pro-inflammatory stimuli. The protein is NF-kappa-B inhibitor-like protein 1 (NFKBIL1) of Pan troglodytes (Chimpanzee).